The sequence spans 74 residues: MISDIILFGTLMVNAGAVLNFKLQKTPSESFVEKTEPTAGDKIRDFLGAVRYFRAFIGLWNIFIMFLMLVFFGS.

The helical transmembrane segment at F53–G73 threads the bilayer.

It belongs to the SMIM7 family.

The protein resides in the membrane. The chain is Protein SMIM7 homolog from Ixodes scapularis (Black-legged tick).